Consider the following 190-residue polypeptide: Elongation factor P (190 aa).

It belongs to the elongation factor P family.

It is found in the cytoplasm. Its pathway is protein biosynthesis; polypeptide chain elongation. Its function is as follows. Involved in peptide bond synthesis. Stimulates efficient translation and peptide-bond synthesis on native or reconstituted 70S ribosomes in vitro. Probably functions indirectly by altering the affinity of the ribosome for aminoacyl-tRNA, thus increasing their reactivity as acceptors for peptidyl transferase. This is Elongation factor P from Sulfurihydrogenibium sp. (strain YO3AOP1).